The following is a 226-amino-acid chain: Large ribosomal subunit protein uL1 (226 aa).

The protein belongs to the universal ribosomal protein uL1 family. In terms of assembly, part of the 50S ribosomal subunit.

Its function is as follows. Binds directly to 23S rRNA. The L1 stalk is quite mobile in the ribosome, and is involved in E site tRNA release. In terms of biological role, protein L1 is also a translational repressor protein, it controls the translation of the L11 operon by binding to its mRNA. This is Large ribosomal subunit protein uL1 from Borreliella burgdorferi (strain ZS7) (Borrelia burgdorferi).